The primary structure comprises 301 residues: GTPase Era (301 aa).

Residues 4 to 173 form the Era-type G domain; the sequence is KAGFVALIGK…LECISKHLIP (170 aa). The tract at residues 12–19 is G1; sequence GKPNAGKS. Residue 12–19 participates in GTP binding; sequence GKPNAGKS. A G2 region spans residues 38 to 42; it reads NATRK. The segment at 64–67 is G3; sequence DTPG. GTP-binding positions include 64 to 68 and 122 to 125; these read DTPGL and SKID. A G4 region spans residues 122–125; it reads SKID. The G5 stretch occupies residues 152 to 154; it reads LSA. The 77-residue stretch at 204 to 280 folds into the KH type-2 domain; that stretch reads LSDEIPYESD…FLNLQVIAQK (77 aa).

Belongs to the TRAFAC class TrmE-Era-EngA-EngB-Septin-like GTPase superfamily. Era GTPase family. As to quaternary structure, monomer.

It localises to the cytoplasm. The protein resides in the cell inner membrane. In terms of biological role, an essential GTPase that binds both GDP and GTP, with rapid nucleotide exchange. Plays a role in 16S rRNA processing and 30S ribosomal subunit biogenesis and possibly also in cell cycle regulation and energy metabolism. The protein is GTPase Era of Helicobacter pylori (strain HPAG1).